Consider the following 211-residue polypeptide: ATP-dependent Clp protease proteolytic subunit (211 aa).

The active-site Nucleophile is serine 114. Histidine 139 is an active-site residue.

The protein belongs to the peptidase S14 family. As to quaternary structure, fourteen ClpP subunits assemble into 2 heptameric rings which stack back to back to give a disk-like structure with a central cavity, resembling the structure of eukaryotic proteasomes.

The protein resides in the cytoplasm. It carries out the reaction Hydrolysis of proteins to small peptides in the presence of ATP and magnesium. alpha-casein is the usual test substrate. In the absence of ATP, only oligopeptides shorter than five residues are hydrolyzed (such as succinyl-Leu-Tyr-|-NHMec, and Leu-Tyr-Leu-|-Tyr-Trp, in which cleavage of the -Tyr-|-Leu- and -Tyr-|-Trp bonds also occurs).. Its function is as follows. Cleaves peptides in various proteins in a process that requires ATP hydrolysis. Has a chymotrypsin-like activity. Plays a major role in the degradation of misfolded proteins. In Pseudomonas fluorescens (strain ATCC BAA-477 / NRRL B-23932 / Pf-5), this protein is ATP-dependent Clp protease proteolytic subunit.